The chain runs to 243 residues: Cell division protein ZipA (243 aa).

Residues 1–4 are Periplasmic-facing; sequence MSDM. A helical transmembrane segment spans residues 5-25; that stretch reads AMIRIGILIAGLLLVAAIFLF. The Cytoplasmic segment spans residues 26-243; the sequence is GRPKKSPQGR…APPLTKSPRW (218 aa). Residues 30 to 89 are disordered; that stretch reads KSPQGRRVDKDEGQPRERREPVISSEFGVEDDAAERAEGVEQSELNLEGQDASGGNEVGK. Basic and acidic residues predominate over residues 35-50; that stretch reads RRVDKDEGQPRERREP.

It belongs to the ZipA family. As to quaternary structure, interacts with FtsZ via their C-terminal domains.

It localises to the cell inner membrane. Its function is as follows. Essential cell division protein that stabilizes the FtsZ protofilaments by cross-linking them and that serves as a cytoplasmic membrane anchor for the Z ring. Also required for the recruitment to the septal ring of downstream cell division proteins. This Xanthomonas euvesicatoria pv. vesicatoria (strain 85-10) (Xanthomonas campestris pv. vesicatoria) protein is Cell division protein ZipA.